The following is a 454-amino-acid chain: Nuclear distribution protein PAC1-1 (454 aa).

The 33-residue stretch at 9 to 41 folds into the LisH domain; that stretch reads QAEELHRALIAYLSSNNLTSTAAALRAEIGLGE. Residues 71 to 93 form a disordered region; it reads RHTSQLSNATPTSRQNKDPVNWL. Residues 73–84 show a composition bias toward polar residues; the sequence is TSQLSNATPTSR. WD repeat units follow at residues 104–145, 147–187, 191–236, 239–278, 283–342, 344–383, and 388–450; these read SHRQ…RTIK, HTKT…KNIR, GHDH…CVKT, GHAE…PEPK, GHEH…IKIL, GHDN…RCVK, and AHAH…LNVR.

Belongs to the WD repeat LIS1/nudF family. In terms of assembly, self-associates. Interacts with NDL1 and dynein.

It is found in the cytoplasm. The protein localises to the cytoskeleton. The protein resides in the spindle pole. In terms of biological role, positively regulates the activity of the minus-end directed microtubule motor protein dynein. May enhance dynein-mediated microtubule sliding by targeting dynein to the microtubule plus end. Required for nuclear migration during vegetative growth as well as development. Required for retrograde early endosome (EE) transport from the hyphal tip. Required for localization of dynein to the mitotic spindle poles. Recruits additional proteins to the dynein complex at SPBs. The polypeptide is Nuclear distribution protein PAC1-1 (Chaetomium globosum (strain ATCC 6205 / CBS 148.51 / DSM 1962 / NBRC 6347 / NRRL 1970) (Soil fungus)).